Reading from the N-terminus, the 609-residue chain is MASFNATEFLKNLSSSAGVYRMYDAKGEVIYVGKAKDLKKRLSSYFRANLGNIKTQALVSHITNIDVTLTHSETDALLLENDYIKQYMPKYNVLLRDDKSYPYLFLSGHKHPRLAYHRGPQREKGRYFGPYPNGGAVRESLNLLQKLFPIRQCDDLYYKARTRPCLQYQLGRCSAPCVNKVTDEDYAEQVQLASLFLQGKDQQVVTNLVTKMEQAAEEFHYEQAAAYRDQITALRKVAEQQEVSLDKGDMDVIGVHYEKAIACFHMLFIRSGKIFGSRSYYPSVPAQTDIDEVLSAFISQFYLNADVQRTLPNEVILSQSFSDKAELESAIAEALEKKFIIKTQVRGERASFLRLALTNATNAVTTRLADKNTQEQRFSLLEEALELGHSIGRMECFDISHTMGESTVASCVVFNREGPHKADYRRYNISGITGGDDYAAMEQAINRRFDKIDTNGKVPDIVFIDGGLGQLRIAQGIVDEKCAHLDRPPLLIGVTKGEGRKAGLETFVFGGSEQQFNLPSDSGAFHLILHIRDESHRFAITGHRNKRQKTRNTSSLESIAGVGPKRRKALLQHLGGLQEVKGASVAELTKVPGISLEMAQTIHDALRGG.

Residues 15 to 93 form the GIY-YIG domain; sequence SSAGVYRMYD…IKQYMPKYNV (79 aa). Residues 202 to 237 enclose the UVR domain; the sequence is QQVVTNLVTKMEQAAEEFHYEQAAAYRDQITALRKV.

This sequence belongs to the UvrC family. In terms of assembly, interacts with UvrB in an incision complex.

The protein resides in the cytoplasm. Functionally, the UvrABC repair system catalyzes the recognition and processing of DNA lesions. UvrC both incises the 5' and 3' sides of the lesion. The N-terminal half is responsible for the 3' incision and the C-terminal half is responsible for the 5' incision. This Shewanella denitrificans (strain OS217 / ATCC BAA-1090 / DSM 15013) protein is UvrABC system protein C.